The chain runs to 402 residues: Nodal homolog 4-A (402 aa).

The first 18 residues, 1 to 18 (MHLYFYCLILLFVPGGNS), serve as a signal peptide directing secretion. A propeptide spanning residues 19–278 (LGINSYLKHM…TIAHTRRHRR (260 aa)) is cleaved from the precursor. Residues N37, N238, and N340 are each glycosylated (N-linked (GlcNAc...) asparagine). Intrachain disulfides connect C302–C368, C331–C399, and C335–C401.

This sequence belongs to the TGF-beta family. As to quaternary structure, homodimer; disulfide-linked. During blastula stages, expressed in the endoderm at a higher level dorsally than ventrally. Expressed in the deep cells of the Spemann organizer at the gastrula stage. Expressed in the notochord (a derivative of the organizer) and neural tube during the neural stages.

The protein localises to the secreted. Its function is as follows. Cooperation and regulatory loops of multiple nodals are essential for mesendoderm patterning in early embryos. Plays a role in mesoderm formation and may be required for neural development. The polypeptide is Nodal homolog 4-A (nodal4-a) (Xenopus laevis (African clawed frog)).